The sequence spans 237 residues: Glucosamine-6-phosphate deaminase (237 aa).

Catalysis depends on D67, which acts as the Proton acceptor; for enolization step. N136 (for ring-opening step) is an active-site residue. The active-site Proton acceptor; for ring-opening step is the H138. The active-site For ring-opening step is the E143.

The protein belongs to the glucosamine/galactosamine-6-phosphate isomerase family. NagB subfamily.

The enzyme catalyses alpha-D-glucosamine 6-phosphate + H2O = beta-D-fructose 6-phosphate + NH4(+). It participates in amino-sugar metabolism; N-acetylneuraminate degradation; D-fructose 6-phosphate from N-acetylneuraminate: step 5/5. In terms of biological role, catalyzes the reversible isomerization-deamination of glucosamine 6-phosphate (GlcN6P) to form fructose 6-phosphate (Fru6P) and ammonium ion. This is Glucosamine-6-phosphate deaminase from Lysinibacillus sphaericus (strain C3-41).